A 182-amino-acid polypeptide reads, in one-letter code: Small ribosomal subunit protein uS4c (182 aa).

The S4 RNA-binding domain occupies 82 to 143; that stretch reads MRLDNILFRL…KQRSKALIQN (62 aa).

This sequence belongs to the universal ribosomal protein uS4 family. In terms of assembly, part of the 30S ribosomal subunit. Contacts protein S5. The interaction surface between S4 and S5 is involved in control of translational fidelity.

Its subcellular location is the plastid. It is found in the chloroplast. One of the primary rRNA binding proteins, it binds directly to 16S rRNA where it nucleates assembly of the body of the 30S subunit. Functionally, with S5 and S12 plays an important role in translational accuracy. The chain is Small ribosomal subunit protein uS4c (rps4) from Iris domestica (Leopard lily).